Here is a 794-residue protein sequence, read N- to C-terminus: Zinc finger and BTB domain-containing protein 17 (794 aa).

Residues 1 to 104 form the BTB domain; the sequence is MDFPQHSQRV…VASFLQMQDI (104 aa). The disordered stretch occupies residues 116-285; it reads EPSSTTGESA…QNLRSGTYGD (170 aa). The segment covering 132 to 142 has biased composition (basic and acidic residues); the sequence is GGDKRAKDEKA. A compositionally biased stretch (low complexity) spans 203–216; that stretch reads SSMAAAEAEALSES. The span at 243–252 shows a compositional bias: basic and acidic residues; it reads VKEEGMHLDN. The span at 254-263 shows a compositional bias: acidic residues; it reads EPPEENEESA. Residues 260–299 are interaction with MYC; that stretch reads EESAGTDSGQELGMEGQNLRSGTYGDRTESKAYGSIIHKC. C2H2-type zinc fingers lie at residues 297 to 319, 325 to 347, 353 to 375, 381 to 403, 409 to 431, 437 to 459, 465 to 487, 493 to 515, 519 to 543, 549 to 571, 577 to 599, 605 to 628, and 708 to 730; these read HKCEDCGKEFTHTGNFKRHIRIH, FSCRECSKAFSDPAACKAHEKTH, YGCEECGKSYRLISLLNLHKKRH, YRCGDCGKLFTTSGNLKRHQLVH, YQCDYCGRSFSDPTSKMRHLETH, HKCPHCDKKFNQVGNLKAHLKIH, LKCRECGKQFTTSGNLKRHLRIH, YVCTHCQRQFADPGALQRHVRIH, KPCQCVICGKAFTQASSLIAHVRQH, YVCERCGKRFVQSSQLANHIRHH, HKCSVCSKAFVNVGDLSKHIIIH, YLCDKCGRGFNRVDNLRSHVKTVH, and YACDSCGDKFLDANSLAQHVRIH. Lys-388 is covalently cross-linked (Glycyl lysine isopeptide (Lys-Gly) (interchain with G-Cter in ubiquitin)). Residue Lys-472 forms a Glycyl lysine isopeptide (Lys-Gly) (interchain with G-Cter in ubiquitin) linkage. Residues 628–709 are interaction with MYC; the sequence is HQGKAGIKIL…EDPNTHILYA (82 aa). Residues 628–794 are interaction with HCFC1; the sequence is HQGKAGIKIL…TAPDCLPPAE (167 aa). A disordered region spans residues 769–794; the sequence is PRDGTEGQPTLAESPPTAPDCLPPAE. A compositionally biased stretch (pro residues) spans 784-794; it reads PTAPDCLPPAE.

Belongs to the krueppel C2H2-type zinc-finger protein family. Homooligomerizes (via the BTB/POZ domain), multimerization is required for DNA binding. Binds to the C-terminal helix-loop-helix motif of MYC which inhibits ZBTB17 transactivation and growth arrest activities and renders it insoluble in the nucleus. Also interacts with HCFC1, MAGEA4 and TMPRSS11A. Interacts (via the C-terminal zinc fingers) with GFI1; the interaction results in the recruitment of MYC to the CDKN1A/p21 and CDKN1B promoters and repression of transcription. Interacts with TRAF2, interfering with the binding of UBC13 to TRAF2, and inhibiting TRAF2 E3 ligase activity. Interacts with BCL6; the interaction inhibits ZBTB17 transactivation activity on target genes involved in cell cycle arrest. Interacts with ZBTB49; this interaction blocks ZBTB17-mediated repression of RB1. Undergoes 'Lys-48'-linked polyubiquitination at Lys-388 and Lys-472 and subsequent proteasomal degradation in a TRAF2-dependent manner and upon TNFA stimulation. Found in all the embryonic and adult tissues examined.

The protein localises to the nucleus. In terms of biological role, transcription factor that can function as an activator or repressor depending on its binding partners, and by targeting negative regulators of cell cycle progression. Has been shown to bind to the promoters of adenovirus major late protein and cyclin D1 and activate transcription. Required for early embryonic development during gastrulation. Plays a critical role in early lymphocyte development, where it is essential to prevent apoptosis in lymphoid precursors, allowing them to survive in response to IL7 and undergo proper lineage commitment. Represses RB1 transcription; this repression can be blocked by interaction with ZBTB49. The protein is Zinc finger and BTB domain-containing protein 17 (Zbtb17) of Mus musculus (Mouse).